The following is a 120-amino-acid chain: Chemokine vCXCL1 (120 aa).

The protein belongs to the intercrine alpha (chemokine CxC) family. As to quaternary structure, interacts with host CXCR1 and CXCR2.

In terms of biological role, acts as a functional chemokine, inducing calcium mobilization, chemotaxis, and degranulation of neutrophils. Contributes to the induction of neutrophil chemotaxis by interacting with host CXCR1 and CXCR2 receptors. This chain is Chemokine vCXCL1 (UL146), found in Human cytomegalovirus (strain Merlin) (HHV-5).